The sequence spans 339 residues: tRNA(Ile)-lysidine synthase (339 aa).

34 to 39 (SGGPDS) provides a ligand contact to ATP.

Belongs to the tRNA(Ile)-lysidine synthase family.

The protein localises to the cytoplasm. The catalysed reaction is cytidine(34) in tRNA(Ile2) + L-lysine + ATP = lysidine(34) in tRNA(Ile2) + AMP + diphosphate + H(+). Ligates lysine onto the cytidine present at position 34 of the AUA codon-specific tRNA(Ile) that contains the anticodon CAU, in an ATP-dependent manner. Cytidine is converted to lysidine, thus changing the amino acid specificity of the tRNA from methionine to isoleucine. In Methylobacterium nodulans (strain LMG 21967 / CNCM I-2342 / ORS 2060), this protein is tRNA(Ile)-lysidine synthase.